The chain runs to 165 residues: Putative pre-16S rRNA nuclease (165 aa).

The protein belongs to the YqgF nuclease family.

The protein localises to the cytoplasm. In terms of biological role, could be a nuclease involved in processing of the 5'-end of pre-16S rRNA. The polypeptide is Putative pre-16S rRNA nuclease (Rhizobium meliloti (strain 1021) (Ensifer meliloti)).